The sequence spans 367 residues: 15-cis-zeta-carotene isomerase, chloroplastic (367 aa).

The transit peptide at 1-58 (MAVYHLLLSSPPSLLLLPPSPRRPNLTLIRRIPAHPRLGNSTSLLSSSSPVIRKILVR) directs the protein to the chloroplast. 6 helical membrane passes run 95–115 (SWVY…VVWI), 137–157 (EVAM…LASL), 172–192 (VLFA…FINH), 211–231 (AIWV…FNLL), 269–289 (LWIG…HHLF), and 339–359 (LPYL…PLMQ).

As to expression, expressed in leaves and at lower levels in roots.

It is found in the plastid. Its subcellular location is the chloroplast membrane. It carries out the reaction 9,9',15-tri-cis-zeta-carotene = 9,9'-di-cis-zeta-carotene. Functionally, isomerase involved in the biosynthesis of carotenoids. Catalyzes the cis- to trans-conversion of the 15-cis-bond in 9,15,9'-tri-cis-zeta-carotene. In Arabidopsis thaliana (Mouse-ear cress), this protein is 15-cis-zeta-carotene isomerase, chloroplastic (Z-ISO).